The chain runs to 115 residues: uncharacterized protein (115 aa).

This is an uncharacterized protein from Bacillus subtilis (strain 168).